The following is a 214-amino-acid chain: Large ribosomal subunit protein bL25 (214 aa).

A disordered region spans residues 187–214 (AEVAPSIEETVEPEVIKKGKKAEEEEEK). Positions 200 to 214 (EVIKKGKKAEEEEEK) are enriched in basic and acidic residues.

It belongs to the bacterial ribosomal protein bL25 family. CTC subfamily. Part of the 50S ribosomal subunit; part of the 5S rRNA/L5/L18/L25 subcomplex. Contacts the 5S rRNA. Binds to the 5S rRNA independently of L5 and L18.

Its function is as follows. This is one of the proteins that binds to the 5S RNA in the ribosome where it forms part of the central protuberance. The polypeptide is Large ribosomal subunit protein bL25 (Thermodesulfovibrio yellowstonii (strain ATCC 51303 / DSM 11347 / YP87)).